Reading from the N-terminus, the 429-residue chain is Glucose-1-phosphate adenylyltransferase (429 aa).

Alpha-D-glucose 1-phosphate-binding positions include Gly162, 177 to 178 (EK), and Ser209.

This sequence belongs to the bacterial/plant glucose-1-phosphate adenylyltransferase family. Homotetramer.

It catalyses the reaction alpha-D-glucose 1-phosphate + ATP + H(+) = ADP-alpha-D-glucose + diphosphate. It functions in the pathway glycan biosynthesis; glycogen biosynthesis. Functionally, involved in the biosynthesis of ADP-glucose, a building block required for the elongation reactions to produce glycogen. Catalyzes the reaction between ATP and alpha-D-glucose 1-phosphate (G1P) to produce pyrophosphate and ADP-Glc. This Picosynechococcus sp. (strain ATCC 27264 / PCC 7002 / PR-6) (Agmenellum quadruplicatum) protein is Glucose-1-phosphate adenylyltransferase.